The following is a 940-amino-acid chain: Isoleucine--tRNA ligase (940 aa).

Positions 58 to 68 (PYANGSIHIGH) match the 'HIGH' region motif. L-isoleucyl-5'-AMP is bound at residue glutamate 564. A 'KMSKS' region motif is present at residues 605 to 609 (KMSKS). Lysine 608 contacts ATP. Residues cysteine 903, cysteine 906, cysteine 923, and cysteine 926 each coordinate Zn(2+).

It belongs to the class-I aminoacyl-tRNA synthetase family. IleS type 1 subfamily. As to quaternary structure, monomer. Requires Zn(2+) as cofactor.

Its subcellular location is the cytoplasm. The enzyme catalyses tRNA(Ile) + L-isoleucine + ATP = L-isoleucyl-tRNA(Ile) + AMP + diphosphate. In terms of biological role, catalyzes the attachment of isoleucine to tRNA(Ile). As IleRS can inadvertently accommodate and process structurally similar amino acids such as valine, to avoid such errors it has two additional distinct tRNA(Ile)-dependent editing activities. One activity is designated as 'pretransfer' editing and involves the hydrolysis of activated Val-AMP. The other activity is designated 'posttransfer' editing and involves deacylation of mischarged Val-tRNA(Ile). This chain is Isoleucine--tRNA ligase, found in Shewanella sp. (strain ANA-3).